The chain runs to 582 residues: NudC domain-containing protein 1 (582 aa).

Ser7 is subject to Phosphoserine. The CS domain maps to 272 to 360 (KVEPLYYWQQ…NEGLMWPELV (89 aa)). The residue at position 387 (Ser387) is a Phosphoserine.

It localises to the cytoplasm. The protein resides in the nucleus. The protein is NudC domain-containing protein 1 of Mus musculus (Mouse).